The following is a 426-amino-acid chain: Phosphomethylpyrimidine synthase (426 aa).

Substrate contacts are provided by residues Asn-65, Met-94, Tyr-123, His-162, 184-186, 225-228, and Glu-264; these read SRG and DGMR. Residue His-268 coordinates Zn(2+). Position 291 (Tyr-291) interacts with substrate. His-332 serves as a coordination point for Zn(2+). Cys-408, Cys-411, and Cys-415 together coordinate [4Fe-4S] cluster.

It belongs to the ThiC family. [4Fe-4S] cluster is required as a cofactor.

The enzyme catalyses 5-amino-1-(5-phospho-beta-D-ribosyl)imidazole + S-adenosyl-L-methionine = 4-amino-2-methyl-5-(phosphooxymethyl)pyrimidine + CO + 5'-deoxyadenosine + formate + L-methionine + 3 H(+). It functions in the pathway cofactor biosynthesis; thiamine diphosphate biosynthesis. Its function is as follows. Catalyzes the synthesis of the hydroxymethylpyrimidine phosphate (HMP-P) moiety of thiamine from aminoimidazole ribotide (AIR) in a radical S-adenosyl-L-methionine (SAM)-dependent reaction. The protein is Phosphomethylpyrimidine synthase of Methanocaldococcus jannaschii (strain ATCC 43067 / DSM 2661 / JAL-1 / JCM 10045 / NBRC 100440) (Methanococcus jannaschii).